Here is a 662-residue protein sequence, read N- to C-terminus: Polyunsaturated fatty acid (12S)/(13S)-lipoxygenase, epidermal-type (662 aa).

Positions 2–114 constitute a PLAT domain; it reads VKYKILVATG…TICLTEGTAL (113 aa). The 548-residue stretch at 115–662 folds into the Lipoxygenase domain; it reads KVTDDTQNLF…PSLVENSVTI (548 aa). Residues H360, H365, H540, and I662 each coordinate Fe cation.

It belongs to the lipoxygenase family. The cofactor is Fe cation. As to expression, expressed in epidermis.

It localises to the cytoplasm. It carries out the reaction (5Z,8Z,11Z,14Z)-eicosatetraenoate + O2 = (12S)-hydroperoxy-(5Z,8Z,10E,14Z)-eicosatetraenoate. It catalyses the reaction 1-O-methyl-(9Z,12Z)-octadecadienoate + O2 = 1-O-methyl-(13S)-hydroperoxy-(9Z,11E)-octadecadienoate. The catalysed reaction is (8Z,11Z,14Z)-eicosatrienoate + O2 = (12S)-hydroperoxy-(8Z,10E,14Z)-eicosatrienoate. The enzyme catalyses (5Z,8Z,11Z)-eicosatrienoate + O2 = (12S)-hydroperoxy-(5Z,8Z,10E)-eicosatrienoate. It carries out the reaction 1-O-methyl-(5Z,8Z,11Z,14Z)-eicosatetraenoate + O2 = 1-O-methyl-(12S)-hydroperoxy-(5Z,8Z,10E,14Z)-eicosatetraenoate. It catalyses the reaction (9Z,12Z)-octadecadienoate + O2 = (13S)-hydroperoxy-(9Z,11E)-octadecadienoate. The catalysed reaction is (4Z,7Z,10Z,13Z,16Z,19Z)-docosahexaenoate + O2 = (14S)-hydroperoxy-(4Z,7Z,10Z,12E,16Z,19Z)-docosahexaenoate. The protein operates within lipid metabolism; hydroperoxy eicosatetraenoic acid biosynthesis. With respect to regulation, arachidonate 12-lipoxygenase activity is decreased when the pH decreases from 7.4 to 6.0. Its function is as follows. Catalyzes the regio and stereo-specific incorporation of a single molecule of dioxygen into free and esterified polyunsaturated fatty acids generating lipid hydroperoxides that can be further reduced to the corresponding hydroxy species. Shows increasing catalytic activity within the series arachidonic acid &lt; 5,8,11-eicosatrienoic acid &lt; linoleic acid &lt; 8,11,14-eicosatrienoic acid. The polypeptide is Polyunsaturated fatty acid (12S)/(13S)-lipoxygenase, epidermal-type (Mus musculus (Mouse)).